The sequence spans 194 residues: Peptidyl-tRNA hydrolase (194 aa).

Tyr-17 lines the tRNA pocket. The active-site Proton acceptor is His-22. TRNA contacts are provided by Phe-68, Asn-70, and Asn-116.

It belongs to the PTH family. As to quaternary structure, monomer.

It localises to the cytoplasm. It catalyses the reaction an N-acyl-L-alpha-aminoacyl-tRNA + H2O = an N-acyl-L-amino acid + a tRNA + H(+). Its function is as follows. Hydrolyzes ribosome-free peptidyl-tRNAs (with 1 or more amino acids incorporated), which drop off the ribosome during protein synthesis, or as a result of ribosome stalling. Functionally, catalyzes the release of premature peptidyl moieties from peptidyl-tRNA molecules trapped in stalled 50S ribosomal subunits, and thus maintains levels of free tRNAs and 50S ribosomes. The polypeptide is Peptidyl-tRNA hydrolase (Actinobacillus pleuropneumoniae serotype 7 (strain AP76)).